A 618-amino-acid chain; its full sequence is Chaperone protein HscA homolog (618 aa).

It belongs to the heat shock protein 70 family.

In terms of biological role, chaperone involved in the maturation of iron-sulfur cluster-containing proteins. Has a low intrinsic ATPase activity which is markedly stimulated by HscB. The chain is Chaperone protein HscA homolog from Variovorax paradoxus (strain S110).